Reading from the N-terminus, the 158-residue chain is Ribosome maturation factor RimP (158 aa).

It belongs to the RimP family.

It is found in the cytoplasm. Required for maturation of 30S ribosomal subunits. The polypeptide is Ribosome maturation factor RimP (Aquifex aeolicus (strain VF5)).